A 242-amino-acid chain; its full sequence is Small ribosomal subunit protein uS2 (242 aa).

This sequence belongs to the universal ribosomal protein uS2 family.

This is Small ribosomal subunit protein uS2 from Shewanella baltica (strain OS223).